Reading from the N-terminus, the 1155-residue chain is MSTWHLFSDSSGDGFRWEVAGRILQSVSDSTPTKALESTAPLPSMADLLLQGCSKLIEREESMPGEIPMFRTGLGKSVVLKESSIAKAKSILAENVAYSDLQNTNCSIPQTRQVDTAETMPMFRTALGKTVPLKESSIAKPLSILGSDMIIDSDNVLPRESGFGVPNSLFQTASNKKVNVSSAGLARAKALLGLEEDDLNGFNHVNQSSSSLQQHGWSGLKTHEEFDATVVKHHSGTPGQYENYVSGKRSEILNPSLKVPPTKFQTAGGKSLSVSAEALKRARNLLGDPELGSFFDDVAGGDQFFTPQKDERLSDIAINNGSVNTGYIAHEEKTSNKHTSNSFVSPLHSSSKQFRSVNLENLASGGNLIKKFDTAVDETNCALNISKPATHGLSNNRPLASDMAVNNSKGNGFIPRARQLGRPADQPLVDITNRRDTAYANNKQDSTQKKRLGKTVSVSPFKRPRISSFKTPLKKNAQQASSGLSVVSCDTLTSKKVLSTRYPEKSPRVYIKEFFGMHPTATTRMDYVPDHVRRIKSSNADKYVFCDESSSNKVGAETFLQMLAESGASLQHASRKWVTNHYRWIVWKLACYDIYYPAKCRGNFLTITNVLEELKYRYEREVNHGHCSAIKRILSGDAPASSMMVLCISAINPRTDNGSQEAHCSDNCSNVKVELTDGWYSMNAALDVVLTKQLNAGKLFVGQKLRILGAGLSGWATPTSPLEAVISSTICLLLNINGTYRAHWADRLGFCKEIGVPLAFNCIKCNGGPVPKTLAGITRIYPILYKERLGEKKSIVRSERIESRIIQLHNQRRSALVEGIMCEYQRGINGVHSQNDTDSEEGAKVFKLLETAAEPELLMAEMSLEQLTSFTTYKAKFEAAKQMQMEKSVAKALEDAGLGERNVTPFMRIRLVGLTSLSNEGEHNPKEGIVTIWDPTERQRTELTEGKIYIMKGLVPMNSDSETLYLHARGSSSRWQPLSPKDSENFQPFFNPRKPISLSNLGEIPLSSEFDIAAYVVYVGDAYTDVLQKKQWVFVTDGSTQHSGEISNSLLAISFSTPFMDDSSVSHISHNLVGSVVGFCNLIKRAKDATNEMWVAETTENSVYFINAEAAYSSHLKTRSAHIQTWAKLYSSKSVIHELRQRVLFIIGACKSPSC.

BRCA2 repeat units follow at residues 63–97 (MPGEIPMFRTGLGKSVVLKESSIAKAKSILAENVA), 116–150 (TAETMPMFRTALGKTVPLKESSIAKPLSILGSDMI), 163–197 (FGVPNSLFQTASNKKVNVSSAGLARAKALLGLEED), and 257–291 (LKVPPTKFQTAGGKSLSVSAEALKRARNLLGDPEL).

In terms of assembly, interacts with RAD51 and DMC1. Interacts with DSS1(I) and DSS1(V). Can interact with both RAD51 and DSS1(I) or both DMC1 and DSS1(I) in a tripartite complex. Expressed in flower buds.

Its function is as follows. Involved in double-strand break repair and/or homologous recombination by mediating RAD51- and DMC1-facilitated DNA repair. Plays an essential role in both somatic and meiotic homologous recombination. Is crucial for the formation of RAD51 and DMC1 foci during male meiotic homologous recombination in prophase I. The polypeptide is Protein BREAST CANCER SUSCEPTIBILITY 2 homolog B (Arabidopsis thaliana (Mouse-ear cress)).